Consider the following 479-residue polypeptide: NADH-quinone oxidoreductase subunit N 2 (479 aa).

Transmembrane regions (helical) follow at residues 9–29 (WALA…LLIV), 40–60 (LLLW…LMLA), 75–95 (RFAV…FFLS), 110–130 (YVLL…IDLL), 131–151 (SIYV…GFLR), 164–184 (VILG…IYGL), 206–226 (LLLA…AVPF), 238–258 (PTTI…AVIL), 272–292 (WIIV…VALV), 299–319 (LLAY…VAGG), 326–346 (VMLY…AVIM), 371–391 (ALLM…AGFF), 404–424 (GFVA…YFYI), and 449–469 (ATLA…AWFL).

It belongs to the complex I subunit 2 family. In terms of assembly, NDH-1 is composed of 14 different subunits. Subunits NuoA, H, J, K, L, M, N constitute the membrane sector of the complex.

The protein localises to the cell inner membrane. It carries out the reaction a quinone + NADH + 5 H(+)(in) = a quinol + NAD(+) + 4 H(+)(out). Its function is as follows. NDH-1 shuttles electrons from NADH, via FMN and iron-sulfur (Fe-S) centers, to quinones in the respiratory chain. The immediate electron acceptor for the enzyme in this species is believed to be ubiquinone. Couples the redox reaction to proton translocation (for every two electrons transferred, four hydrogen ions are translocated across the cytoplasmic membrane), and thus conserves the redox energy in a proton gradient. This is NADH-quinone oxidoreductase subunit N 2 from Rhizobium meliloti (strain 1021) (Ensifer meliloti).